The primary structure comprises 371 residues: 2-aminoethylphosphonate--pyruvate transaminase (371 aa).

K195 is subject to N6-(pyridoxal phosphate)lysine.

It belongs to the class-V pyridoxal-phosphate-dependent aminotransferase family. PhnW subfamily. Homotetramer; however this is for an enzyme with a molecular weight of 16500, which is in disagreement with the weight of this protein. Pyridoxal 5'-phosphate is required as a cofactor.

The catalysed reaction is (2-aminoethyl)phosphonate + pyruvate = phosphonoacetaldehyde + L-alanine. Its activity is regulated as follows. Inhibited by phosphonic acids and very slightly inhibited by aminophosphonic acids. Its function is as follows. Involved in phosphonate degradation. This Pseudomonas aeruginosa (strain ATCC 15692 / DSM 22644 / CIP 104116 / JCM 14847 / LMG 12228 / 1C / PRS 101 / PAO1) protein is 2-aminoethylphosphonate--pyruvate transaminase (phnW).